The chain runs to 372 residues: Serine/threonine-protein kinase 17B (372 aa).

The Protein kinase domain occupies 33–293 (TLTPKELGRG…AESCLSHSWL (261 aa)). ATP contacts are provided by residues 39 to 47 (LGRGKFAVV) and Lys62. Asp158 acts as the Proton acceptor in catalysis. The disordered stretch occupies residues 305 to 348 (EETSGSSQIQDLTLRSSEEKTSKSSCNGSCGAREDKENIPEDGS). A compositionally biased stretch (polar residues) spans 307 to 319 (TSGSSQIQDLTLR).

The protein belongs to the protein kinase superfamily. CAMK Ser/Thr protein kinase family. DAP kinase subfamily. In terms of assembly, interacts with CHP1; the interaction induces CHP1 to translocate from the Golgi to the nucleus. Autophosphorylated.

It localises to the nucleus. The protein localises to the cell membrane. The protein resides in the endoplasmic reticulum-Golgi intermediate compartment. The enzyme catalyses L-seryl-[protein] + ATP = O-phospho-L-seryl-[protein] + ADP + H(+). It catalyses the reaction L-threonyl-[protein] + ATP = O-phospho-L-threonyl-[protein] + ADP + H(+). In terms of biological role, acts as a positive regulator of apoptosis. Phosphorylates myosin light chains. This chain is Serine/threonine-protein kinase 17B (Stk17b), found in Mus musculus (Mouse).